Reading from the N-terminus, the 212-residue chain is Thymidylate kinase (212 aa).

An ATP-binding site is contributed by 11-18 (GLEGAGKT).

It belongs to the thymidylate kinase family.

The catalysed reaction is dTMP + ATP = dTDP + ADP. Phosphorylation of dTMP to form dTDP in both de novo and salvage pathways of dTTP synthesis. This is Thymidylate kinase (tmk) from Buchnera aphidicola subsp. Acyrthosiphon pisum (strain APS) (Acyrthosiphon pisum symbiotic bacterium).